A 153-amino-acid chain; its full sequence is Ribosome maturation factor RimP (153 aa).

This sequence belongs to the RimP family.

The protein resides in the cytoplasm. Its function is as follows. Required for maturation of 30S ribosomal subunits. This Coxiella burnetii (strain RSA 331 / Henzerling II) protein is Ribosome maturation factor RimP.